A 332-amino-acid polypeptide reads, in one-letter code: Tetraacyldisaccharide 4'-kinase (332 aa).

60–67 (TVGGTGKT) serves as a coordination point for ATP.

Belongs to the LpxK family.

The enzyme catalyses a lipid A disaccharide + ATP = a lipid IVA + ADP + H(+). Its pathway is glycolipid biosynthesis; lipid IV(A) biosynthesis; lipid IV(A) from (3R)-3-hydroxytetradecanoyl-[acyl-carrier-protein] and UDP-N-acetyl-alpha-D-glucosamine: step 6/6. Transfers the gamma-phosphate of ATP to the 4'-position of a tetraacyldisaccharide 1-phosphate intermediate (termed DS-1-P) to form tetraacyldisaccharide 1,4'-bis-phosphate (lipid IVA). The protein is Tetraacyldisaccharide 4'-kinase of Pseudomonas paraeruginosa (strain DSM 24068 / PA7) (Pseudomonas aeruginosa (strain PA7)).